A 554-amino-acid chain; its full sequence is Thermosome subunit beta (554 aa).

The disordered stretch occupies residues 532-554 (GKKSGSEPSGKKEKDKEEKSSED). A compositionally biased stretch (basic and acidic residues) spans 540–554 (SGKKEKDKEEKSSED).

This sequence belongs to the TCP-1 chaperonin family. Forms a Heterooligomeric complex of two stacked eight-membered rings.

Functionally, molecular chaperone; binds unfolded polypeptides in vitro, and has a weak ATPase activity. The protein is Thermosome subunit beta (thsB) of Saccharolobus solfataricus (strain ATCC 35092 / DSM 1617 / JCM 11322 / P2) (Sulfolobus solfataricus).